Reading from the N-terminus, the 330-residue chain is Diacylglycerol acyltransferase/mycolyltransferase Ag85A (330 aa).

The N-terminal stretch at 1–42 (MKFVDRFRGAVAGMLRRLVVEAMGVALLSALIGVVGSAPAEA) is a signal peptide. 84–85 (LR) contributes to the substrate binding site. The tract at residues 100 to 110 (FEWYYQSGISV) is fibronectin-binding. An intrachain disulfide couples cysteine 129 to cysteine 134. Positions 168 and 196 each coordinate substrate. The active-site Nucleophile is the serine 168. Glutamate 272 is an active-site residue. Substrate is bound by residues 274 to 277 (LVRT), lysine 281, and 304 to 306 (HSW). Histidine 304 is a catalytic residue.

It belongs to the mycobacterial A85 antigen family. Homodimer.

The protein localises to the secreted. The protein resides in the cell wall. It localises to the cytoplasm. It catalyses the reaction an acyl-CoA + a 1,2-diacyl-sn-glycerol = a triacyl-sn-glycerol + CoA. The catalysed reaction is 2 alpha,alpha'-trehalose 6-mycolate = alpha,alpha'-trehalose 6,6'-bismycolate + alpha,alpha-trehalose. The antigen 85 proteins (FbpA, FbpB, FbpC) are responsible for the high affinity of mycobacteria for fibronectin, a large adhesive glycoprotein, which facilitates the attachment of M.tuberculosis to murine alveolar macrophages (AMs). They also help to maintain the integrity of the cell wall by catalyzing the transfer of mycolic acids to cell wall arabinogalactan, and through the synthesis of alpha,alpha-trehalose dimycolate (TDM, cord factor). They catalyze the transfer of a mycoloyl residue from one molecule of alpha,alpha-trehalose monomycolate (TMM) to another TMM, leading to the formation of TDM. FbpA mediates triacylglycerol (TAG) formation with long-chain acyl-CoA as the acyl donor and 1,2-dipalmitoyl-sn-glycerol (1,2-dipalmitin) as the acyl acceptor. It has a preference for C26:0-CoA over C18:1-CoA. The protein is Diacylglycerol acyltransferase/mycolyltransferase Ag85A (fbpA) of Mycobacterium leprae (strain TN).